The following is a 1473-amino-acid chain: MAGGAWGRLACYLEFLKKEELKEFQLLLANKAHSRSSSGETPAQPEKTSGMEVASYLVAQYGEQRAWDLALHTWEQMGLRSLCAQAQEGAGHSPSFPYSPSEPHLGSPSQPTSTAVLMPWIHELPAGCTQGSERRVLRQLPDTSGRRWREISASLLYQALPSSPDHESPSQESPNAPTSTAVLGSWGSPPQPSLAPREQEAPGTQWPLDETSGIYYTEIREREREKSEKGRPPWAAVVGTPPQAHTSLQPHHHPWEPSVRESLCSTWPWKNEDFNQKFTQLLLLQRPHPRSQDPLVKRSWPDYVEENRGHLIEIRDLFGPGLDTQEPRIVILQGAAGIGKSTLARQVKEAWGRGQLYGDRFQHVFYFSCRELAQSKVVSLAELIGKDGTATPAPIRQILSRPERLLFILDGVDEPGWVLQEPSSELCLHWSQPQPADALLGSLLGKTILPEASFLITARTTALQNLIPSLEQARWVEVLGFSESSRKEYFYRYFTDERQAIRAFRLVKSNKELWALCLVPWVSWLACTCLMQQMKRKEKLTLTSKTTTTLCLHYLAQALQAQPLGPQLRDLCSLAAEGIWQKKTLFSPDDLRKHGLDGAIISTFLKMGILQEHPIPLSYSFIHLCFQEFFAAMSYVLEDEKGRGKHSNCIIDLEKTLEAYGIHGLFGASTTRFLLGLLSDEGEREMENIFHCRLSQGRNLMQWVPSLQLLLQPHSLESLHCLYETRNKTFLTQVMAHFEEMGMCVETDMELLVCTFCIKFSRHVKKLQLIEGRQHRSTWSPTMVVLFRWVPVTDAYWQILFSVLKVTRNLKELDLSGNSLSHSAVKSLCKTLRRPRCLLETLRLAGCGLTAEDCKDLAFGLRANQTLTELDLSFNVLTDAGAKHLCQRLRQPSCKLQRLQLVSCGLTSDCCQDLASVLSASPSLKELDLQQNNLDDVGVRLLCEGLRHPACKLIRLGLDQTTLSDEMRQELRALEQEKPQLLIFSRRKPSVMTPTEGLDTGEMSNSTSSLKRQRLGSERAASHVAQANLKLLDVSKIFPIAEIAEESSPEVVPVELLCVPSPASQGDLHTKPLGTDDDFWGPTGPVATEVVDKEKNLYRVHFPVAGSYRWPNTGLCFVMREAVTVEIEFCVWDQFLGEINPQHSWMVAGPLLDIKAEPGAVEAVHLPHFVALQGGHVDTSLFQMAHFKEEGMLLEKPARVELHHIVLENPSFSPLGVLLKMIHNALRFIPVTSVVLLYHRVHPEEVTFHLYLIPSDCSIRKAIDDLEMKFQFVRIHKPPPLTPLYMGCRYTVSGSGSGMLEILPKELELCYRSPGEDQLFSEFYVGHLGSGIRLQVKDKKDETLVWEALVKPGDLMPATTLIPPARIAVPSPLDAPQLLHFVDQYREQLIARVTSVEVVLDKLHGQVLSQEQYERVLAENTRPSQMRKLFSLSQSWDRKCKDGLYQALKETHPHLIMELWEKGSKKGLLPLSS.

The Pyrin domain occupies 1–92 (MAGGAWGRLA…CAQAQEGAGH (92 aa)). Positions 90 to 113 (AGHSPSFPYSPSEPHLGSPSQPTS) are disordered. Residues Ser-93, Ser-99, and Ser-101 each carry the phosphoserine; by MAPK11 and MAPK14 modification. Residue Ser-107 is modified to Phosphoserine; by MAPK14. Residues 111 to 117 (PTSTAVL) carry the ZAKalpha motif 1 motif. Thr-112 is subject to Phosphothreonine; by MAPK11, MAPK14 and MAP3K20. Residue Ser-113 is modified to Phosphoserine; by MAP3K20. A phosphothreonine; by MAP3K20 mark is found at Thr-114 and Thr-129. At Ser-132 the chain carries Phosphoserine; by MAP3K20. The tract at residues 160-254 (LPSSPDHESP…HTSLQPHHHP (95 aa)) is disordered. A Phosphoserine; by MAPK14 modification is found at Ser-163. Position 168 is a phosphoserine; by MAPK11 and MAPk14 (Ser-168). Ser-170 carries the post-translational modification Phosphoserine; by MAPK11 and MAPK14. Residues 170 to 182 (SQESPNAPTSTAV) show a composition bias toward polar residues. Ser-173 carries the phosphoserine; by MAPK11 modification. Positions 177-183 (PTSTAVL) match the ZAKalpha motif 2 motif. Thr-178 carries the post-translational modification Phosphothreonine; by MAPK11. Position 179 is a phosphoserine; by MAPK11 and MAP3K20 (Ser-179). Thr-180 carries the post-translational modification Phosphothreonine; by MAPK11 and MAP3K20. The span at 218-231 (EIREREREKSEKGR) shows a compositional bias: basic and acidic residues. Residues 328–637 (RIVILQGAAG…EFFAAMSYVL (310 aa)) form the NACHT domain. 334 to 341 (GAAGIGKS) is a binding site for ATP. 6 LRR repeats span residues 809-830 (NLKELDLSGNSLSHSAVKSLCK), 838-858 (LLETLRLAGCGLTAEDCKDLA), 866-887 (TLTELDLSFNVLTDAGAKHLCQ), 895-915 (KLQRLQLVSCGLTSDCCQDLA), 923-944 (SLKELDLQQNNLDDVGVRLLCE), and 950-973 (ACKLIRLGLDQTTLSDEMRQELRA). Residues 991–1017 (VMTPTEGLDTGEMSNSTSSLKRQRLGS) are disordered. A ZU5 region spans residues 1079-1212 (FWGPTGPVAT…HHIVLENPSF (134 aa)). One can recognise an FIIND domain in the interval 1079-1364 (FWGPTGPVAT…LMPATTLIPP (286 aa)). The interval 1213–1364 (SPLGVLLKMI…LMPATTLIPP (152 aa)) is UPA. The CARD domain occupies 1374-1463 (DAPQLLHFVD…HLIMELWEKG (90 aa)).

The protein belongs to the NLRP family. In terms of assembly, interacts (via LRR repeats) with BCL2 and BCL2L1 (via the loop between motifs BH4 and BH3); these interactions reduce NLRP1 inflammasome-induced CASP1 activation and IL1B release, possibly by impairing NLRP1 interaction with PYCARD. Interacts with NOD2; this interaction is enhanced in the presence of muramyl dipeptide (MDP) and increases IL1B release. Interacts with EIF2AK2/PKR; this interaction requires EIF2AK2 activity, is accompanied by EIF2AK2 autophosphorylation and promotes inflammasome assembly in response to danger-associated signals. Interacts with MEFV; this interaction targets NLRP1 to degradation by autophagy, hence preventing excessive IL1B- and IL18-mediated inflammation. Binds (via LRR domain) to dsDNA and dsRNA. Interacts with DPP9; leading to inhibit activation of the inflammasome. DPP9 acts via formation of a ternary complex, composed of a DPP9 homodimer, one full-length NLRP1 protein, and one cleaved C-terminus of NLRP1 (NACHT, LRR and PYD domains-containing protein 1, C-terminus). Interacts with DPP8; leading to inhibit activation of the inflammasome, probably via formation of a ternary complex with DPP8. As to quaternary structure, interacts with the C-terminal part of NLRP1 (NACHT, LRR and PYD domains-containing protein 1, C-terminus) in absence of pathogens and other damage-associated signals. Interacts with the N-terminal part of NLRP1 (NACHT, LRR and PYD domains-containing protein 1, N-terminus) in absence of pathogens and other damage-associated signals. Homomultimer; forms the NLRP1 inflammasome polymeric complex, a filament composed of homopolymers of this form in response to pathogens and other damage-associated signals. The NLRP1 inflammasome polymeric complex associates with PYCARD/ASC. Interacts (via CARD domain) with PYCARD/ASC (via CARD domain); leading to pro-caspase-1 (proCASP1) recruitment. Pro-caspase-1 (proCASP1) filament formation increases local enzyme concentration, resulting in trans-autocleavage and activation. Active CASP1 then processes IL1B and IL18 precursors, leading to the release of mature cytokines in the extracellular milieu and inflammatory response. In terms of assembly, (Microbial infection) Interacts with vaccinia virus protein F1. As to quaternary structure, (Microbial infection) Interacts with human herpes virus 8/HHV-8 proteins ORF45; relieving autoinhibition of the NLRP1 inflammasome. In terms of processing, autocatalytically cleaved. Autocatalytic cleavage in FIIND region occurs constitutively, prior to activation signals, and is required for inflammasome activity (IL1B release), possibly by facilitating CASP1 binding. Both N- and C-terminal parts remain associated non-covalently. Post-translationally, ubiquitinated by the cullin:ZER1/ZYG11B complex in response to pathogen-associated signals, leading to its degradation by the proteasome and subsequent release of the cleaved C-terminal part of the protein (NACHT, LRR and PYD domains-containing protein 1, C-terminus), which polymerizes and forms the NLRP1 inflammasome. Phosphorylated by MAP3K20 isoform ZAKalpha, MAPK11 and MAPK14 in response to UV-B irradiation and ribosome collisions, promoting activation of the NLRP1 inflammasome and pyroptosis. In terms of processing, (Microbial infection) Cleaved between Gln-130 and Gly-131 by the Protease 3C from various human enteroviruses and rhinoviruses (EV68, EV71, Coxsackievirus B3, HRV-14 and HRV-16). This cleavage triggers N-glycine-mediated proteasomal degradation of the autoinhibitory NLRP1 N-terminal fragment via the cullin:ZER1/ZYG11B complex which liberates the activating C-terminal fragment and activates NLRP1 inflammasome. Post-translationally, (Microbial infection) Cleaved between Gln-333 and Gly-334 by the 3C-like proteinase nsp5 from human coronavirus SARS-CoV-2. This cleavage liberates the activating C-terminal fragment and activates NLRP1 inflammasome, leading to downstream activation of GSDME and lung epithelial cell death. As to expression, widely expressed. Abundantly expressed in primary immune cells (isoform 1 and isoform 2), including in neutrophils, monocytes/macrophages, dendritic cells (mostly Langerhans cells), and B- and T-lymphocytes (at protein level). Strongly expressed in epithelial cells lining the glandular epithelium, such as that of the gastrointestinal tract (stomach, small intestine, colon), the respiratory tract (trachea and bronchi), and the endometrial and endocervical glands, gallbladder, prostate, and breast (at protein level). In testis, expressed in spermatogonia and primary spermatocytes, but not in Sertoli cells (at protein level). In the brain, expressed in neurons, in particular in pyramidal ones and in oligodendrocytes, but not detected in microglia (at protein level). Expressed in adult and fetal ocular tissues, including in adult and 24-week old fetal choroid, sclera, cornea, and optic nerve, as well as in adult retina and fetal retina/retinal pigment epithelium. Highly expressed in the skin throughout the epidermis and in dermal fibroblasts, in both glabrous skin and plantar skin. It is detected in keratinocytes, but not in melanocytes. Expressed in epidermal appendages such as hair follicles.

It localises to the cytoplasm. The protein localises to the cytosol. Its subcellular location is the nucleus. It is found in the inflammasome. It carries out the reaction ATP + H2O = ADP + phosphate + H(+). Its activity is regulated as follows. NLRP1 inflammasome is activated by cleavage by the Protease 3C from various human enteroviruses and rhinoviruses (EV68, EV71, Coxsackievirus B3, HRV-14 and HRV-16): cleavage promotes ubiquitination and degradation of the N-terminal part, releasing the cleaved C-terminal part of the protein (NACHT, LRR and PYD domains-containing protein 1, C-terminus), which polymerizes and forms the NLRP1 inflammasome. Activated double-stranded RNA: positive-strand RNA viruses such as Semliki forest virus and long dsRNA activate the NLRP1 inflammasome. In contrast to its mouse ortholog, not activated by Bacillus anthracis lethal toxin. NLRP1 inflammasome is inhibited by DPP8 and DPP9, which sequester the C-terminal fragment of NLRP1 (NACHT, LRR and PYD domains-containing protein 1, C-terminus) in a ternary complex, thereby preventing NLRP1 oligomerization and activation. NLRP1 inflammasome is activated by Val-boroPro (Talabostat, PT-100), an inhibitor of dipeptidyl peptidases DPP8 and DPP9. Val-boroPro relieves inhibition of DPP8 and/or DPP9 by promoting disruption of the ternary complex, releasing its C-terminal part from autoinhibition. ATPase activity is activated by dsRNA-binding but not dsDNA-binding. With respect to regulation, (Microbial infection) The NLRP1 inflammasome is activated by human herpes virus 8/HHV-8 protein ORF45, which interacts with the N-terminal part of NLRP1 and promotes its translocation into the nucleus, relieving autoinhibition and leading to activation. (Microbial infection) NLRP1 inflammasome is activated by cleavage by the 3C-like proteinase nsp5 from human coronavirus SARS-CoV-2. Acts as the sensor component of the NLRP1 inflammasome, which mediates inflammasome activation in response to various pathogen-associated signals, leading to subsequent pyroptosis. Inflammasomes are supramolecular complexes that assemble in the cytosol in response to pathogens and other damage-associated signals and play critical roles in innate immunity and inflammation. Acts as a recognition receptor (PRR): recognizes specific pathogens and other damage-associated signals, such as cleavage by some human enteroviruses and rhinoviruses, double-stranded RNA, UV-B irradiation, or Val-boroPro inhibitor, and mediates the formation of the inflammasome polymeric complex composed of NLRP1, CASP1 and PYCARD/ASC. In response to pathogen-associated signals, the N-terminal part of NLRP1 is degraded by the proteasome, releasing the cleaved C-terminal part of the protein (NACHT, LRR and PYD domains-containing protein 1, C-terminus), which polymerizes and associates with PYCARD/ASC to initiate the formation of the inflammasome complex: the NLRP1 inflammasome recruits pro-caspase-1 (proCASP1) and promotes caspase-1 (CASP1) activation, which subsequently cleaves and activates inflammatory cytokines IL1B and IL18 and gasdermin-D (GSDMD), leading to pyroptosis. In the absence of GSDMD expression, the NLRP1 inflammasome is able to recruit and activate CASP8, leading to activation of gasdermin-E (GSDME). Activation of NLRP1 inflammasome is also required for HMGB1 secretion; the active cytokines and HMGB1 stimulate inflammatory responses. Binds ATP and shows ATPase activity. Plays an important role in antiviral immunity and inflammation in the human airway epithelium. Specifically recognizes a number of pathogen-associated signals: upon infection by human rhinoviruses 14 and 16 (HRV-14 and HRV-16), NLRP1 is cleaved and activated which triggers NLRP1-dependent inflammasome activation and IL18 secretion. Positive-strand RNA viruses, such as Semliki forest virus and long dsRNA activate the NLRP1 inflammasome, triggering IL1B release in a NLRP1-dependent fashion. Acts as a direct sensor for long dsRNA and thus RNA virus infection. May also be activated by muramyl dipeptide (MDP), a fragment of bacterial peptidoglycan, in a NOD2-dependent manner. The NLRP1 inflammasome is also activated in response to UV-B irradiation causing ribosome collisions: ribosome collisions cause phosphorylation and activation of NLRP1 in a MAP3K20-dependent manner, leading to pyroptosis. Its function is as follows. Constitutes the precursor of the NLRP1 inflammasome, which mediates autoproteolytic processing within the FIIND domain to generate the N-terminal and C-terminal parts, which are associated non-covalently in absence of pathogens and other damage-associated signals. In terms of biological role, regulatory part that prevents formation of the NLRP1 inflammasome: in absence of pathogens and other damage-associated signals, interacts with the C-terminal part of NLRP1 (NACHT, LRR and PYD domains-containing protein 1, C-terminus), preventing activation of the NLRP1 inflammasome. In response to pathogen-associated signals, this part is ubiquitinated and degraded by the proteasome, releasing the cleaved C-terminal part of the protein, which polymerizes and forms the NLRP1 inflammasome. Functionally, constitutes the active part of the NLRP1 inflammasome. In absence of pathogens and other damage-associated signals, interacts with the N-terminal part of NLRP1 (NACHT, LRR and PYD domains-containing protein 1, N-terminus), preventing activation of the NLRP1 inflammasome. In response to pathogen-associated signals, the N-terminal part of NLRP1 is degraded by the proteasome, releasing this form, which polymerizes and associates with PYCARD/ASC to form of the NLRP1 inflammasome complex: the NLRP1 inflammasome complex then directly recruits pro-caspase-1 (proCASP1) and promotes caspase-1 (CASP1) activation, leading to gasdermin-D (GSDMD) cleavage and subsequent pyroptosis. It is unclear whether is involved in inflammasome formation. It is not cleaved within the FIIND domain, does not assemble into specks, nor promote IL1B release. However, in an vitro cell-free system, it has been shown to be activated by MDP. This is NACHT, LRR and PYD domains-containing protein 1 from Homo sapiens (Human).